The sequence spans 1430 residues: Caskin-1 (1430 aa).

ANK repeat units follow at residues 48 to 77, 81 to 110, 114 to 143, 147 to 176, 188 to 217, and 220 to 249; these read DGFS…AVDI, KGMR…AVNV, EGHI…NPCI, SGKT…CAAL, NGTS…DINR, and KSGT…NAQV. Tyr-253 bears the Phosphotyrosine mark. The SH3 domain maps to 281-347; it reads SAALQVRATK…PSSLGEAIVK (67 aa). The interval 348 to 372 is disordered; the sequence is RAGSRTGSEPSPPQGGGSLGPSAPP. Position 358 is a phosphoserine (Ser-358). The interval 375 to 471 is CASK-binding; it reads IWVLRKPFAG…PKKLESSSAS (97 aa). Arg-398 is modified (omega-N-methylarginine). Residues 421–430 show a composition bias toward polar residues; sequence QKSVSESSPG. The tract at residues 421-472 is disordered; it reads QKSVSESSPGDSPVKPPEGSSGAARSQPPAAHAGQVYGEQPPKKLESSSASE. 2 positions are modified to phosphoserine: Ser-423 and Ser-432. SAM domains follow at residues 474-537 and 543-607; these read KSAE…LNIP and HKPA…LAEL. 2 positions are modified to phosphoserine: Ser-635 and Ser-648. Over residues 667–679 the composition is skewed to low complexity; it reads LSGPAEAGAAAAE. 4 disordered regions span residues 667–1001, 1015–1040, 1055–1371, and 1388–1407; these read LSGP…SAGS, GGGG…DPGR, GPDG…RQKL, and KIRQ…EKST. Over residues 683 to 711 the composition is skewed to polar residues; the sequence is NHLPATPRTTSRQESSLSGRARHMSSSQE. A phosphoserine mark is found at Ser-722 and Ser-727. Phosphothreonine is present on Thr-740. Ser-790 is modified (phosphoserine). Over residues 847-859 the composition is skewed to pro residues; sequence PPAPGPVPPPVPA. Ser-890, Ser-892, and Ser-988 each carry phosphoserine. Positions 1027-1036 are enriched in pro residues; it reads GHPTPRPASP. The residue at position 1066 (Thr-1066) is a Phosphothreonine. Phosphoserine is present on Ser-1068. Over residues 1147–1159 the composition is skewed to basic and acidic residues; the sequence is DTVKRRPKAKEPD. A compositionally biased stretch (pro residues) spans 1190–1214; that stretch reads PELPPPPPPAEPPPTDLMPLPPLPL. At Ser-1258 the chain carries Phosphoserine. The residue at position 1267 (Thr-1267) is a Phosphothreonine. A compositionally biased stretch (pro residues) spans 1267–1282; the sequence is TPPPVSPKPPPPPTAP. 3 stretches are compositionally biased toward low complexity: residues 1283-1298, 1308-1326, and 1344-1358; these read KPAK…SATP, PPAA…SASP, and PRAA…PVAS. At Ser-1362 the chain carries Phosphoserine. Over residues 1388-1406 the composition is skewed to basic and acidic residues; it reads KIRQEDGQGPRPSSIEEKS.

In terms of assembly, polymerizes, via the tandem SAM domains, to form long, 8 nM wide fibers, upon which other proteins can assemble. Binds the CaM kinase domain of CASK. Forms a ternary complex with CASK and LIN7A, LIN7B or LIN7C. Competes with APBA1 that forms a similar complex with CASK and LIN7 proteins. The tripartite complex CASKIN1/CASK/LIN7(A/B/C) binds the cytoplasmic tail of NRXN1. In terms of tissue distribution, expressed in brain. Localized primarily to the neuropil and enriched in synaptic areas (at protein level).

The protein localises to the cytoplasm. May link the scaffolding protein CASK to downstream intracellular effectors. The chain is Caskin-1 (Caskin1) from Rattus norvegicus (Rat).